Consider the following 160-residue polypeptide: Lipoprotein signal peptidase (160 aa).

2 consecutive transmembrane segments (helical) span residues 63–83 (YRLP…AVTF) and 89–109 (DQHL…GNLI). Residues D119 and D137 contribute to the active site. The helical transmembrane segment at 132 to 152 (AFNVADSAICVGVALLAVDMI) threads the bilayer.

The protein belongs to the peptidase A8 family.

The protein resides in the cell inner membrane. It catalyses the reaction Release of signal peptides from bacterial membrane prolipoproteins. Hydrolyzes -Xaa-Yaa-Zaa-|-(S,diacylglyceryl)Cys-, in which Xaa is hydrophobic (preferably Leu), and Yaa (Ala or Ser) and Zaa (Gly or Ala) have small, neutral side chains.. The protein operates within protein modification; lipoprotein biosynthesis (signal peptide cleavage). Its function is as follows. This protein specifically catalyzes the removal of signal peptides from prolipoproteins. This is Lipoprotein signal peptidase from Geobacter sulfurreducens (strain ATCC 51573 / DSM 12127 / PCA).